The following is a 143-amino-acid chain: Small ribosomal subunit protein uS9 (143 aa).

A disordered region spans residues 124–143 (PEPKKFGGKGARARFQKSYR). Over residues 134 to 143 (ARARFQKSYR) the composition is skewed to basic residues.

This sequence belongs to the universal ribosomal protein uS9 family.

In Candida glabrata (strain ATCC 2001 / BCRC 20586 / JCM 3761 / NBRC 0622 / NRRL Y-65 / CBS 138) (Yeast), this protein is Small ribosomal subunit protein uS9 (RPS16).